The following is a 635-amino-acid chain: Transaminated amino acid decarboxylase (635 aa).

Residue K588 forms a Glycyl lysine isopeptide (Lys-Gly) (interchain with G-Cter in ubiquitin) linkage.

The protein belongs to the TPP enzyme family. Mg(2+) serves as cofactor. It depends on thiamine diphosphate as a cofactor.

Its subcellular location is the cytoplasm. The catalysed reaction is 4-methyl-2-oxopentanoate + H(+) = 3-methylbutanal + CO2. It catalyses the reaction (S)-3-methyl-2-oxopentanoate + H(+) = 2-methylbutanal + CO2. The enzyme catalyses indole-3-pyruvate + H(+) = indole-3-acetaldehyde + CO2. It carries out the reaction 3-phenylpyruvate + H(+) = 2-phenylacetaldehyde + CO2. The catalysed reaction is 4-methylsulfanyl-2-oxobutanoate + H(+) = 3-methylsulfanylpropanal + CO2. It catalyses the reaction 3-(4-hydroxyphenyl)pyruvate + H(+) = (4-hydroxyphenyl)acetaldehyde + CO2. It functions in the pathway amino-acid degradation; Ehrlich pathway. Functionally, one of five 2-oxo acid decarboxylases (PDC1, PDC5, PDC6, ARO10, and THI3) involved in amino acid catabolism. The enzyme catalyzes the decarboxylation of amino acids, which, in a first step, have been transaminated to the corresponding 2-oxo acids (alpha-keto-acids). In a third step, the resulting aldehydes are reduced to alcohols, collectively referred to as fusel oils or alcohols. Its preferred substrates are the transaminated amino acids derived from phenylalanine (phenylpyruvate), tryptophan (3-(indol-3-yl)pyruvate), and probably tyrosine (4-hydroxyphenylpyruvate), but also isoleucine ((3S)-3-methyl-2-oxopentanoate, also alpha-keto-beta-methylvalerate) and methionine (4-methylthio-2-oxobutanoate), whereas transaminated leucine (4-methyl-2-oxopentanoate, also alpha-keto-isocaproate) is a low efficiency substrate and transaminated valine and pyruvate are no substrates. In analogy to the pyruvate decarboxylases the enzyme may in a side-reaction catalyze condensation (or carboligation) reactions leading to the formation of 2-hydroxy ketone, collectively called acyloins. This chain is Transaminated amino acid decarboxylase (ARO10), found in Saccharomyces cerevisiae (strain ATCC 204508 / S288c) (Baker's yeast).